The sequence spans 308 residues: Elongation factor Ts (308 aa).

Residues 80–83 (TDFV) form an involved in Mg(2+) ion dislocation from EF-Tu region.

Belongs to the EF-Ts family.

It localises to the cytoplasm. In terms of biological role, associates with the EF-Tu.GDP complex and induces the exchange of GDP to GTP. It remains bound to the aminoacyl-tRNA.EF-Tu.GTP complex up to the GTP hydrolysis stage on the ribosome. This is Elongation factor Ts from Methylobacterium radiotolerans (strain ATCC 27329 / DSM 1819 / JCM 2831 / NBRC 15690 / NCIMB 10815 / 0-1).